The sequence spans 240 residues: Small ribosomal subunit protein uS3 (240 aa).

The KH type-2 domain maps to leucine 39–arginine 108. The segment covering methionine 213–lysine 224 has biased composition (basic and acidic residues). The segment at methionine 213 to asparagine 240 is disordered. Over residues alanine 225–asparagine 240 the composition is skewed to basic residues.

The protein belongs to the universal ribosomal protein uS3 family. In terms of assembly, part of the 30S ribosomal subunit. Forms a tight complex with proteins S10 and S14.

Binds the lower part of the 30S subunit head. Binds mRNA in the 70S ribosome, positioning it for translation. The sequence is that of Small ribosomal subunit protein uS3 from Nautilia profundicola (strain ATCC BAA-1463 / DSM 18972 / AmH).